The chain runs to 424 residues: Imidazolonepropionase (424 aa).

The Fe(3+) site is built by His-85 and His-87. Zn(2+) is bound by residues His-85 and His-87. Residues Arg-94, Tyr-157, and His-190 each contribute to the 4-imidazolone-5-propanoate site. Tyr-157 contributes to the N-formimidoyl-L-glutamate binding site. His-255 contacts Fe(3+). His-255 contacts Zn(2+). A 4-imidazolone-5-propanoate-binding site is contributed by Glu-258. Asp-329 lines the Fe(3+) pocket. Asp-329 provides a ligand contact to Zn(2+). Residues Asn-331 and Gly-333 each coordinate N-formimidoyl-L-glutamate. Ser-334 contacts 4-imidazolone-5-propanoate.

It belongs to the metallo-dependent hydrolases superfamily. HutI family. Requires Zn(2+) as cofactor. The cofactor is Fe(3+).

It is found in the cytoplasm. It carries out the reaction 4-imidazolone-5-propanoate + H2O = N-formimidoyl-L-glutamate. It participates in amino-acid degradation; L-histidine degradation into L-glutamate; N-formimidoyl-L-glutamate from L-histidine: step 3/3. Its function is as follows. Catalyzes the hydrolytic cleavage of the carbon-nitrogen bond in imidazolone-5-propanoate to yield N-formimidoyl-L-glutamate. It is the third step in the universal histidine degradation pathway. This Brevibacillus brevis (strain 47 / JCM 6285 / NBRC 100599) protein is Imidazolonepropionase.